Here is a 576-residue protein sequence, read N- to C-terminus: Arginine--tRNA ligase (576 aa).

The 'HIGH' region signature appears at Ala-126–His-136.

This sequence belongs to the class-I aminoacyl-tRNA synthetase family. In terms of assembly, monomer.

The protein localises to the cytoplasm. It catalyses the reaction tRNA(Arg) + L-arginine + ATP = L-arginyl-tRNA(Arg) + AMP + diphosphate. The chain is Arginine--tRNA ligase from Rickettsia canadensis (strain McKiel).